We begin with the raw amino-acid sequence, 150 residues long: Aspartate 1-decarboxylase (150 aa).

S24 (schiff-base intermediate with substrate; via pyruvic acid) is an active-site residue. The residue at position 24 (S24) is a Pyruvic acid (Ser). T56 is a binding site for substrate. Residue Y57 is the Proton donor of the active site. G72–A74 is a substrate binding site.

This sequence belongs to the PanD family. Heterooctamer of four alpha and four beta subunits. The cofactor is pyruvate. Post-translationally, is synthesized initially as an inactive proenzyme, which is activated by self-cleavage at a specific serine bond to produce a beta-subunit with a hydroxyl group at its C-terminus and an alpha-subunit with a pyruvoyl group at its N-terminus.

Its subcellular location is the cytoplasm. It carries out the reaction L-aspartate + H(+) = beta-alanine + CO2. It functions in the pathway cofactor biosynthesis; (R)-pantothenate biosynthesis; beta-alanine from L-aspartate: step 1/1. Its function is as follows. Catalyzes the pyruvoyl-dependent decarboxylation of aspartate to produce beta-alanine. The chain is Aspartate 1-decarboxylase from Xanthobacter autotrophicus (strain ATCC BAA-1158 / Py2).